A 368-amino-acid polypeptide reads, in one-letter code: Zinc finger protein 24 (368 aa).

Lysine 22 participates in a covalent cross-link: Glycyl lysine isopeptide (Lys-Gly) (interchain with G-Cter in SUMO2). A Glycyl lysine isopeptide (Lys-Gly) (interchain with G-Cter in SUMO1); alternate cross-link involves residue lysine 27. A Glycyl lysine isopeptide (Lys-Gly) (interchain with G-Cter in SUMO2); alternate cross-link involves residue lysine 27. Residues 52–134 enclose the SCAN box domain; sequence RQRFRQFGYQ…TVLEDLESEL (83 aa). Residues serine 132 and serine 142 each carry the phosphoserine modification. Residues lysine 147, lysine 177, and lysine 236 each participate in a glycyl lysine isopeptide (Lys-Gly) (interchain with G-Cter in SUMO2) cross-link. The segment at 251–273 adopts a C2H2-type 1 zinc-finger fold; it reads HICDECGKHFSQGSALILHQRIH. The necessary and sufficient for nuclear localization stretch occupies residues 251–301; sequence HICDECGKHFSQGSALILHQRIHSGEKPYGCVECGKAFSRSSILVQHQRVH. The residue at position 274 (serine 274) is a Phosphoserine. Residues lysine 277 and lysine 286 each participate in a glycyl lysine isopeptide (Lys-Gly) (interchain with G-Cter in SUMO2) cross-link. C2H2-type zinc fingers lie at residues 279-301, 307-329, and 335-357; these read YGCVECGKAFSRSSILVQHQRVH, YKCLECGKAFSQNSGLINHQRIH, and YECVQCGKSYSQSSNLFRHQRRH. At serine 292 the chain carries Phosphoserine. Tyrosine 335 is modified (phosphotyrosine). Glycyl lysine isopeptide (Lys-Gly) (interchain with G-Cter in SUMO2) cross-links involve residues lysine 361 and lysine 367.

Belongs to the krueppel C2H2-type zinc-finger protein family. Post-translationally, sumoylated. In terms of tissue distribution, expressed in many tissues except in heart.

Its subcellular location is the nucleus. Its function is as follows. Transcription factor required for myelination of differentiated oligodendrocytes. Required for the conversion of oligodendrocytes from the premyelinating to the myelinating state. In the developing central nervous system (CNS), involved in the maintenance in the progenitor stage by promoting the cell cycle. Specifically binds to the 5'-TCAT-3' DNA sequence. Has transcription repressor activity in vitro. The polypeptide is Zinc finger protein 24 (ZNF24) (Homo sapiens (Human)).